A 691-amino-acid chain; its full sequence is MPRTHAIEDYRNFGIMAHIDAGKTTTTERILYYTGKSHKIGEVHDGAATMDWMTQEQERGITITSAATTAIWAGKRLNIIDTPGHVDFTIEVERSLRVLDGAVCVLDGNQGVEPQTETVWRQADKYNVPRIVFVNKMDKIGADFYRCVEMIVDRVAGNPVCCQLPIGSENNFKGVIDLVRMKAVVWEDEALGAKYHDEEIPADLADKAAEYRNKLVEAAVELDDDAMTAYLDGVEPDVATLKSLIRKAVIGRKFNPVFCGSAFKNKGVQPLLDAVVDFLPSPIDRGAIKGIDFKTEEDTVRMPSDDEPTSVLAFKIMDDPFVGTITFCRVYAGKMETGMGLLNSTRDKRERVGRMLLMHANNREDIKEAYAGDIVALAGLKDVRTGDTLCDPAKAVILEKMEFPEPVIEIAIEPKSKADQEKLGIALSKLAAEDPSFRVSTDFESGQTILKGMGELHLDIKVDILKRTYKVDANIGAPQVAYRETITKKYEVDYTHKKQTGGTGQFARVKFIVEPNEVGKGFVFESAIVGGAVPKEYIPGVQKGLESVLGAGVLAGFPVVDVKVQLIDGAFHEVDSSALAFEIASRAAFREALQKGSPVLLEPIMKVEVVTPEDYTGSVIGDLNSRRGQIQGQDMRGNANVVNAMVPLANMFGYVNTLRSFSQGRATFTMQFDHYEQVPSNVAQEVQAKYA.

Positions 8-283 constitute a tr-type G domain; that stretch reads EDYRNFGIMA…AVVDFLPSPI (276 aa). GTP contacts are provided by residues 17-24, 81-85, and 135-138; these read AHIDAGKT, DTPGH, and NKMD.

The protein belongs to the TRAFAC class translation factor GTPase superfamily. Classic translation factor GTPase family. EF-G/EF-2 subfamily.

The protein localises to the cytoplasm. In terms of biological role, catalyzes the GTP-dependent ribosomal translocation step during translation elongation. During this step, the ribosome changes from the pre-translocational (PRE) to the post-translocational (POST) state as the newly formed A-site-bound peptidyl-tRNA and P-site-bound deacylated tRNA move to the P and E sites, respectively. Catalyzes the coordinated movement of the two tRNA molecules, the mRNA and conformational changes in the ribosome. The protein is Elongation factor G of Xanthobacter autotrophicus (strain ATCC BAA-1158 / Py2).